The primary structure comprises 911 residues: Bifunctional aspartokinase/homoserine dehydrogenase 1, chloroplastic (911 aa).

A chloroplast-targeting transit peptide spans 1 to 82; the sequence is MPVVSLAKVV…VENGHLPKGD (82 aa). Residues 83–331 are aspartokinase; that stretch reads SWAVHKFGGT…VSEAVVLKTL (249 aa). Residues 332-557 are interface; sequence SYQEAWEMSY…LSRTTLAVGI (226 aa). ACT domains lie at 407-482 and 488-565; these read VEGT…IIPN and AVGQ…LIGG. Positions 558–911 are homoserine dehydrogenase; that stretch reads IGPGLIGGTL…RLAFYLGAPS (354 aa). NAD(+) contacts are provided by isoleucine 563 and threonine 644. Residues isoleucine 563, threonine 644, and lysine 668 each contribute to the NADP(+) site. Residues isoleucine 563, threonine 644, and lysine 668 each coordinate NADPH. Na(+)-binding residues include glutamate 695, valine 698, alanine 700, and leucine 702. NADP(+) is bound by residues glycine 753 and glutamate 756. Positions 756 and 767 each coordinate L-homoserine. Catalysis depends on lysine 771, which acts as the Proton donor. Glycine 888 contacts NAD(+). An NADP(+)-binding site is contributed by glycine 888. Glycine 888 serves as a coordination point for NADPH.

This sequence in the N-terminal section; belongs to the aspartokinase family. It in the C-terminal section; belongs to the homoserine dehydrogenase family. In terms of assembly, homo- or heterodimer. A metal cation serves as cofactor.

Its subcellular location is the plastid. The protein localises to the chloroplast. The enzyme catalyses L-homoserine + NADP(+) = L-aspartate 4-semialdehyde + NADPH + H(+). The catalysed reaction is L-homoserine + NAD(+) = L-aspartate 4-semialdehyde + NADH + H(+). It catalyses the reaction L-aspartate + ATP = 4-phospho-L-aspartate + ADP. It functions in the pathway amino-acid biosynthesis; L-lysine biosynthesis via DAP pathway; (S)-tetrahydrodipicolinate from L-aspartate: step 1/4. The protein operates within amino-acid biosynthesis; L-methionine biosynthesis via de novo pathway; L-homoserine from L-aspartate: step 1/3. It participates in amino-acid biosynthesis; L-methionine biosynthesis via de novo pathway; L-homoserine from L-aspartate: step 3/3. Its pathway is amino-acid biosynthesis; L-threonine biosynthesis; L-threonine from L-aspartate: step 1/5. It functions in the pathway amino-acid biosynthesis; L-threonine biosynthesis; L-threonine from L-aspartate: step 3/5. Its activity is regulated as follows. Inhibition of aspartate kinase activity by threonine and leucine and 3-fold activation by cysteine, isoleucine, valine, serine and alanine at 2.5 mM. Partial inhibition of homoserine dehydrogenase activity by threonine and cysteine (14% of activity remaining at saturation with either amino acid). No synergy between the effectors for both activation or inhibition. Its function is as follows. Bifunctional aspartate kinase and homoserine dehydrogenase that catalyzes the first and the third steps toward the synthesis of lysine, methionine and threonine from aspartate. This Arabidopsis thaliana (Mouse-ear cress) protein is Bifunctional aspartokinase/homoserine dehydrogenase 1, chloroplastic.